The primary structure comprises 371 residues: Chaperone protein DnaJ (371 aa).

The 65-residue stretch at 4–68 (DYYQILGVSK…QKRAAYDRFG (65 aa)) folds into the J domain. The CR-type zinc-finger motif lies at 134–212 (GIEKNISFSS…CHGMGRYHKQ (79 aa)). The Zn(2+) site is built by Cys-147, Cys-150, Cys-164, Cys-167, Cys-186, Cys-189, Cys-200, and Cys-203. CXXCXGXG motif repeat units follow at residues 147-154 (CDTCHGTG), 164-171 (CDACGGVG), 186-193 (CHKCQGNG), and 200-207 (CKKCHGMG).

The protein belongs to the DnaJ family. As to quaternary structure, homodimer. Requires Zn(2+) as cofactor.

It is found in the cytoplasm. In terms of biological role, participates actively in the response to hyperosmotic and heat shock by preventing the aggregation of stress-denatured proteins and by disaggregating proteins, also in an autonomous, DnaK-independent fashion. Unfolded proteins bind initially to DnaJ; upon interaction with the DnaJ-bound protein, DnaK hydrolyzes its bound ATP, resulting in the formation of a stable complex. GrpE releases ADP from DnaK; ATP binding to DnaK triggers the release of the substrate protein, thus completing the reaction cycle. Several rounds of ATP-dependent interactions between DnaJ, DnaK and GrpE are required for fully efficient folding. Also involved, together with DnaK and GrpE, in the DNA replication of plasmids through activation of initiation proteins. In Rickettsia felis (strain ATCC VR-1525 / URRWXCal2) (Rickettsia azadi), this protein is Chaperone protein DnaJ.